Consider the following 925-residue polypeptide: Aspulvinone E synthetase melA (925 aa).

Residues 11–434 (ETAAARNGDG…GGRAKETIII (424 aa)) form an adenylation (A) domain region. The region spanning 564–644 (SPKNDFEKGL…ELAAALDNLY (81 aa)) is the Carrier domain. Residue Ser601 is modified to O-(pantetheine 4'-phosphoryl)serine. Positions 663-923 (PLWLVHPGAG…KILRSALAER (261 aa)) are thioesterase (TE) domain.

The protein belongs to the NRP synthetase family.

It is found in the cytoplasm. It catalyses the reaction 2 3-(4-hydroxyphenyl)pyruvate + AH2 + 2 ATP + O2 = aspulvinone E + A + 2 AMP + CO2 + 2 diphosphate + H2O + H(+). Nonribosomal peptide synthase; part of the gene cluster that mediates the biosynthesis of Asp-melanin, a pigment that confers resistance against UV light and hampers phagocytosis by soil amoeba. The nonribosomal peptide synthase melA converts 4-hydroxyphenylpyruvate (4-HPPA) to aspulvinone E. The tyrosinase tyrP then performs hydroxylations of both aromatic moieties of aspulvinone E. The product of tyrP is highly unstable, and, due to the high reactivity of methides and ortho-diquinones, the polymeric Asp-melanin forms spontaneously. The protein is Aspulvinone E synthetase melA of Aspergillus terreus (strain NIH 2624 / FGSC A1156).